The following is a 280-amino-acid chain: L-proline cis-4-hydroxylase (280 aa).

Fe cation-binding residues include histidine 106, aspartate 108, and histidine 154. Arginine 164 serves as a coordination point for 2-oxoglutarate.

It belongs to the L-proline cis-4-/cis-3-hydroxylase family. Fe(2+) is required as a cofactor.

It catalyses the reaction L-proline + 2-oxoglutarate + O2 = cis-4-hydroxy-L-proline + succinate + CO2. With respect to regulation, inhibited by metal ions such as Co(2+), Zn(2+), Cu(2+) or Ni(2+). Is also inhibited by EDTA or diethylpyrocarbonate (DEPC) in vitro. Unlike the procollagen-proline cis-3- and trans-4-hydroxylases from mammals, does not necessarily require L-ascorbate for activity although it does increase the activity of the enzyme. Dioxygenase that catalyzes the 2-oxoglutarate-dependent selective hydroxylation of free L-proline to cis-4-hydroxy-L-proline (cis-4-Hyp). In Rhizobium meliloti (strain 1021) (Ensifer meliloti), this protein is L-proline cis-4-hydroxylase.